A 192-amino-acid polypeptide reads, in one-letter code: uncharacterized protein (192 aa).

2 disordered regions span residues M1–P37 and A146–K192. 2 stretches are compositionally biased toward pro residues: residues T8–V19 and A159–P180.

This is an uncharacterized protein from Homo sapiens (Human).